Here is a 340-residue protein sequence, read N- to C-terminus: Holliday junction branch migration complex subunit RuvB (340 aa).

The large ATPase domain (RuvB-L) stretch occupies residues 1-184 (MNENLDPTNQ…FGIQSRLQYY (184 aa)). ATP-binding positions include Leu23, Arg24, Gly65, Lys68, Thr69, Thr70, 131 to 133 (EDF), Arg174, Tyr184, and Arg221. A Mg(2+)-binding site is contributed by Thr69. Residues 185–255 (NAELLTTIVQ…IAKFALNALH (71 aa)) form a small ATPAse domain (RuvB-S) region. The head domain (RuvB-H) stretch occupies residues 258 to 340 (AHGLDEMDNK…VKANVQGGLF (83 aa)). DNA is bound by residues Arg313 and Arg318.

This sequence belongs to the RuvB family. Homohexamer. Forms an RuvA(8)-RuvB(12)-Holliday junction (HJ) complex. HJ DNA is sandwiched between 2 RuvA tetramers; dsDNA enters through RuvA and exits via RuvB. An RuvB hexamer assembles on each DNA strand where it exits the tetramer. Each RuvB hexamer is contacted by two RuvA subunits (via domain III) on 2 adjacent RuvB subunits; this complex drives branch migration. In the full resolvosome a probable DNA-RuvA(4)-RuvB(12)-RuvC(2) complex forms which resolves the HJ.

The protein localises to the cytoplasm. The catalysed reaction is ATP + H2O = ADP + phosphate + H(+). In terms of biological role, the RuvA-RuvB-RuvC complex processes Holliday junction (HJ) DNA during genetic recombination and DNA repair, while the RuvA-RuvB complex plays an important role in the rescue of blocked DNA replication forks via replication fork reversal (RFR). RuvA specifically binds to HJ cruciform DNA, conferring on it an open structure. The RuvB hexamer acts as an ATP-dependent pump, pulling dsDNA into and through the RuvAB complex. RuvB forms 2 homohexamers on either side of HJ DNA bound by 1 or 2 RuvA tetramers; 4 subunits per hexamer contact DNA at a time. Coordinated motions by a converter formed by DNA-disengaged RuvB subunits stimulates ATP hydrolysis and nucleotide exchange. Immobilization of the converter enables RuvB to convert the ATP-contained energy into a lever motion, pulling 2 nucleotides of DNA out of the RuvA tetramer per ATP hydrolyzed, thus driving DNA branch migration. The RuvB motors rotate together with the DNA substrate, which together with the progressing nucleotide cycle form the mechanistic basis for DNA recombination by continuous HJ branch migration. Branch migration allows RuvC to scan DNA until it finds its consensus sequence, where it cleaves and resolves cruciform DNA. The sequence is that of Holliday junction branch migration complex subunit RuvB from Flavobacterium psychrophilum (strain ATCC 49511 / DSM 21280 / CIP 103535 / JIP02/86).